The primary structure comprises 357 residues: tRNA-specific 2-thiouridylase MnmA (357 aa).

Residues 3–10 (AMSGGVDS) and Leu29 contribute to the ATP site. The active-site Nucleophile is the Cys98. A disulfide bridge connects residues Cys98 and Cys196. Residue Gly122 coordinates ATP. The interaction with tRNA stretch occupies residues 146 to 148 (KDQ). Cys196 serves as the catalytic Cysteine persulfide intermediate. Positions 302-303 (RY) are interaction with tRNA.

The protein belongs to the MnmA/TRMU family.

Its subcellular location is the cytoplasm. It catalyses the reaction S-sulfanyl-L-cysteinyl-[protein] + uridine(34) in tRNA + AH2 + ATP = 2-thiouridine(34) in tRNA + L-cysteinyl-[protein] + A + AMP + diphosphate + H(+). Catalyzes the 2-thiolation of uridine at the wobble position (U34) of tRNA, leading to the formation of s(2)U34. The polypeptide is tRNA-specific 2-thiouridylase MnmA (Moorella thermoacetica (strain ATCC 39073 / JCM 9320)).